We begin with the raw amino-acid sequence, 186 residues long: Nuclear transcription factor Y subunit B-1 (186 aa).

The disordered stretch occupies residues 1–24 (MAGNKKRGGRNMDQVKKAAVRSDG). A DNA-binding region spans residues 34–40 (LPMANLV). The tract at residues 61–72 (THDCAVEFVGFV) is subunit association domain (SAD). The segment at 123 to 142 (GGNRRVAPPPPAAATPLTPG) is disordered.

The protein belongs to the NFYB/HAP3 subunit family. As to quaternary structure, heterotrimeric transcription factor composed of three components, NF-YA, NF-YB and NF-YC. NF-YB and NF-YC must interact and dimerize for NF-YA association and DNA binding. Interacts with MADS18. Forms a ternary complex with the MADS6-MADS18 heterodimer. As to expression, expressed in developing kernels.

The protein localises to the nucleus. Its function is as follows. Component of the NF-Y/HAP transcription factor complex. The NF-Y complex stimulates the transcription of various genes by recognizing and binding to a CCAAT motif in promoters. May act through association with MADS-box proteins. May regulate the expression of genes involved in flowering. In Oryza sativa subsp. japonica (Rice), this protein is Nuclear transcription factor Y subunit B-1 (NFYB1).